A 446-amino-acid chain; its full sequence is MPKEKNHLNLVVIGHVDSGKSTSTGHLIYKCGGIDKRTIEKFEKEAAEMGKGSFKYAWVLDKLKAERERGITIDIALWNFETAKSVFTIIDAPGHRDFIKNMITGTSQADAAILIIASGQGEFEAGISKEGQTREHALLAFTMGVKQMIVAVNKMDDKSVNWDQGRFIEIKKELSDYLKKIWLQPRQDPFIPISGWHGDNMLEKSPNMPWFTGSTLIDALDALDQPKRPKDKPLRLPLQDVYKIGGIGTVPVGRVETGLLKPGMVLTFAPMNITTECKSVEMHHESLTEAEPGDNVGFTVKNLSVKDLRRGYVASDSKNDPAKDTTNFLAQVIVLNHPGQIQKGYAPVLDCHTAHIACKFDEIESKVDRRSGKVLEEEPKFIKSGEAALVRMVPQKPMCVEAFNQYPPLGRFAVRDMKQTVAVGVIKEVVKKEQKGMVTKAAQKKK.

In terms of domain architecture, tr-type G spans Lys5–Lys230. A G1 region spans residues Gly14–Ser21. Gly14 to Ser21 serves as a coordination point for GTP. Positions Gly70 to Asp74 are G2. Residues Asp91–Gly94 form a G3 region. GTP-binding positions include Asp91–His95 and Asn153–Asp156. The interval Asn153–Asp156 is G4. Residues Ser194–Trp196 are G5.

Belongs to the TRAFAC class translation factor GTPase superfamily. Classic translation factor GTPase family. EF-Tu/EF-1A subfamily.

Its subcellular location is the cytoplasm. Functionally, this protein promotes the GTP-dependent binding of aminoacyl-tRNA to the A-site of ribosomes during protein biosynthesis. The chain is Elongation factor 1-alpha (EFAA) from Stylonychia lemnae (Ciliate).